We begin with the raw amino-acid sequence, 188 residues long: Inosine triphosphate pyrophosphatase (188 aa).

9–14 contributes to the ITP binding site; it reads TGNAKK. Glu39 is a binding site for Mg(2+). Residues Lys51, 67-68, Lys84, 143-146, Lys166, and 171-172 contribute to the ITP site; these read DT, FGWD, and HR.

This sequence belongs to the HAM1 NTPase family. In terms of assembly, homodimer. The cofactor is Mg(2+). It depends on Mn(2+) as a cofactor.

It is found in the cytoplasm. The enzyme catalyses ITP + H2O = IMP + diphosphate + H(+). The catalysed reaction is dITP + H2O = dIMP + diphosphate + H(+). It carries out the reaction XTP + H2O = XMP + diphosphate + H(+). Functionally, pyrophosphatase that hydrolyzes non-canonical purine nucleotides such as inosine triphosphate (ITP), deoxyinosine triphosphate (dITP) or xanthosine 5'-triphosphate (XTP) to their respective monophosphate derivatives. The enzyme does not distinguish between the deoxy- and ribose forms. Probably excludes non-canonical purines from RNA and DNA precursor pools, thus preventing their incorporation into RNA and DNA and avoiding chromosomal lesions. In Aedes aegypti (Yellowfever mosquito), this protein is Inosine triphosphate pyrophosphatase.